A 154-amino-acid chain; its full sequence is Large ribosomal subunit protein uL13 (154 aa).

The protein belongs to the universal ribosomal protein uL13 family. As to quaternary structure, part of the 50S ribosomal subunit.

In terms of biological role, this protein is one of the early assembly proteins of the 50S ribosomal subunit, although it is not seen to bind rRNA by itself. It is important during the early stages of 50S assembly. In Brucella canis (strain ATCC 23365 / NCTC 10854 / RM-666), this protein is Large ribosomal subunit protein uL13.